A 208-amino-acid polypeptide reads, in one-letter code: Uridine kinase (208 aa).

11–18 (GGTGSGKS) contributes to the ATP binding site.

It belongs to the uridine kinase family.

The protein resides in the cytoplasm. The catalysed reaction is uridine + ATP = UMP + ADP + H(+). It catalyses the reaction cytidine + ATP = CMP + ADP + H(+). Its pathway is pyrimidine metabolism; CTP biosynthesis via salvage pathway; CTP from cytidine: step 1/3. It participates in pyrimidine metabolism; UMP biosynthesis via salvage pathway; UMP from uridine: step 1/1. The polypeptide is Uridine kinase (Clostridium perfringens (strain SM101 / Type A)).